The following is a 102-amino-acid chain: Large ribosomal subunit protein bL21 (102 aa).

The protein belongs to the bacterial ribosomal protein bL21 family. Part of the 50S ribosomal subunit. Contacts protein L20.

Functionally, this protein binds to 23S rRNA in the presence of protein L20. The sequence is that of Large ribosomal subunit protein bL21 from Campylobacter hominis (strain ATCC BAA-381 / DSM 21671 / CCUG 45161 / LMG 19568 / NCTC 13146 / CH001A).